A 244-amino-acid chain; its full sequence is Tetraspanin-1 (244 aa).

The next 4 membrane-spanning stretches (helical) occupy residues 11-31, 67-87, 104-124, and 198-218; these read VLFF…AVGF, LIVV…TAVL, YLVL…AVLV, and ILLV…PILI.

It belongs to the tetraspanin (TM4SF) family.

Its subcellular location is the membrane. The protein is Tetraspanin-1 (tsp-1) of Caenorhabditis elegans.